The sequence spans 525 residues: MSDIHEHKILILDFGSQYTQLIARRIREIGVYCELWAWDVTEAQIREFAPNGIILAGGPESVTAENSPRAPEYVFTAGVPVLGICYGMQTMSEQLGGKVIQGVGEGEFGYAQIEMLTDSLLFKGIEDAVNSEGKPLLDVWMSHGDKVSAIPEGFVAVAKTDTCPFAAMANEEKQFFGVQFHPEVTHTRQGMRMLSHFALDICGCAANWKPSSIIEDAIERLKKQIGDDEVILGLSGGVDSSVVAMLLHRAIGKKLTCVFVDNGLLRLNEAEQVMEMFGDHFGLNIIHVDAENRFLDAMKGEADPEAKRKIIGRVFVEIFDEESKKCANAKWLAQGTIYPDVIESAGSATGKAHVIKSHHNVGGLPDHMELGLVEPLRELFKDEVRKIGLELGLPYNMLYRHPFPGPGLGVRVLGEVKKEYCDLLRRADAIFIEELHKADLYNKVSQAFTVFLPVRSVGVMGDGRKYDWVVSLRAVETVDFMTAHWAHLPYDFLGRVSNRIINEVDGISRVVYDISGKPPATIEWE.

One can recognise a Glutamine amidotransferase type-1 domain in the interval 8-207 (KILILDFGSQ…ALDICGCAAN (200 aa)). The active-site Nucleophile is the Cys85. Residues His181 and Glu183 contribute to the active site. In terms of domain architecture, GMPS ATP-PPase spans 208 to 400 (WKPSSIIEDA…LGLPYNMLYR (193 aa)). 235-241 (SGGVDSS) contacts ATP.

As to quaternary structure, homodimer.

It catalyses the reaction XMP + L-glutamine + ATP + H2O = GMP + L-glutamate + AMP + diphosphate + 2 H(+). It participates in purine metabolism; GMP biosynthesis; GMP from XMP (L-Gln route): step 1/1. Functionally, catalyzes the synthesis of GMP from XMP. The polypeptide is GMP synthase [glutamine-hydrolyzing] (Shewanella baltica (strain OS223)).